Reading from the N-terminus, the 201-residue chain is Molybdenum cofactor guanylyltransferase (201 aa).

GTP-binding positions include Leu15–Gly17, Lys28, Asp74, and Asp104. Asp104 lines the Mg(2+) pocket.

The protein belongs to the MobA family. As to quaternary structure, monomer. Requires Mg(2+) as cofactor.

The protein resides in the cytoplasm. The enzyme catalyses Mo-molybdopterin + GTP + H(+) = Mo-molybdopterin guanine dinucleotide + diphosphate. In terms of biological role, transfers a GMP moiety from GTP to Mo-molybdopterin (Mo-MPT) cofactor (Moco or molybdenum cofactor) to form Mo-molybdopterin guanine dinucleotide (Mo-MGD) cofactor. This is Molybdenum cofactor guanylyltransferase from Pseudomonas syringae pv. tomato (strain ATCC BAA-871 / DC3000).